The chain runs to 352 residues: tRNA pseudouridine synthase D (352 aa).

The Nucleophile role is filled by Asp81. Residues 157 to 303 enclose the TRUD domain; the sequence is GVPNYFGTQR…MDHERRILRL (147 aa).

The protein belongs to the pseudouridine synthase TruD family.

It carries out the reaction uridine(13) in tRNA = pseudouridine(13) in tRNA. Responsible for synthesis of pseudouridine from uracil-13 in transfer RNAs. This is tRNA pseudouridine synthase D from Pseudomonas putida (strain ATCC 700007 / DSM 6899 / JCM 31910 / BCRC 17059 / LMG 24140 / F1).